A 233-amino-acid polypeptide reads, in one-letter code: Large ribosomal subunit protein uL1 (233 aa).

The protein belongs to the universal ribosomal protein uL1 family. As to quaternary structure, part of the 50S ribosomal subunit.

In terms of biological role, binds directly to 23S rRNA. Forms the L1 stalk. Unlike the case in the Thermus thermophilus 70S ribosome, this protein is not seen to block the exit path of the E site tRNA. It is clear that the protein in the structure is flexible however, so this is probably due to its position in these crystals. Protein L1 is also a translational repressor protein, it controls the translation of the L11 operon by binding to its mRNA. The polypeptide is Large ribosomal subunit protein uL1 (rplA) (Deinococcus radiodurans (strain ATCC 13939 / DSM 20539 / JCM 16871 / CCUG 27074 / LMG 4051 / NBRC 15346 / NCIMB 9279 / VKM B-1422 / R1)).